We begin with the raw amino-acid sequence, 164 residues long: Phosphopantetheine adenylyltransferase (164 aa).

Residue Ser-10 coordinates substrate. Residues Ser-10–Phe-11 and His-18 each bind ATP. 3 residues coordinate substrate: Lys-42, Leu-74, and Arg-88. ATP is bound by residues Gly-89–Arg-91, Glu-99, and Tyr-124–Ser-130.

This sequence belongs to the bacterial CoaD family. In terms of assembly, homohexamer. Mg(2+) is required as a cofactor.

Its subcellular location is the cytoplasm. The enzyme catalyses (R)-4'-phosphopantetheine + ATP + H(+) = 3'-dephospho-CoA + diphosphate. It participates in cofactor biosynthesis; coenzyme A biosynthesis; CoA from (R)-pantothenate: step 4/5. In terms of biological role, reversibly transfers an adenylyl group from ATP to 4'-phosphopantetheine, yielding dephospho-CoA (dPCoA) and pyrophosphate. This Exiguobacterium sp. (strain ATCC BAA-1283 / AT1b) protein is Phosphopantetheine adenylyltransferase.